We begin with the raw amino-acid sequence, 595 residues long: Proline--tRNA ligase (595 aa).

It belongs to the class-II aminoacyl-tRNA synthetase family. ProS type 1 subfamily. In terms of assembly, homodimer.

It is found in the cytoplasm. The enzyme catalyses tRNA(Pro) + L-proline + ATP = L-prolyl-tRNA(Pro) + AMP + diphosphate. Its function is as follows. Catalyzes the attachment of proline to tRNA(Pro) in a two-step reaction: proline is first activated by ATP to form Pro-AMP and then transferred to the acceptor end of tRNA(Pro). As ProRS can inadvertently accommodate and process non-cognate amino acids such as alanine and cysteine, to avoid such errors it has two additional distinct editing activities against alanine. One activity is designated as 'pretransfer' editing and involves the tRNA(Pro)-independent hydrolysis of activated Ala-AMP. The other activity is designated 'posttransfer' editing and involves deacylation of mischarged Ala-tRNA(Pro). The misacylated Cys-tRNA(Pro) is not edited by ProRS. This is Proline--tRNA ligase from Treponema denticola (strain ATCC 35405 / DSM 14222 / CIP 103919 / JCM 8153 / KCTC 15104).